A 566-amino-acid chain; its full sequence is uncharacterized protein (566 aa).

This is an uncharacterized protein from Escherichia coli (strain K12).